Consider the following 285-residue polypeptide: MATSKLKTQNVVVSLSLTLTLVLVLLTSKANSAETVSFSWNKFVPKQPNMILQGDAIVTSSGKLQLNKVDENGTPKPSSLGRALYSTPIHIWDKETGSVASFAASFNFTFYAPDTKRLADGLAFFLAPIDTKPQTHAGYLGLFNENESGDQVVAVEFDTFRNSWDPPNPHIGINVNSIRSIKTTSWDLANNKVAKVLITYDASTSLLVASLVYPSQRTSNILSDVVDLKTSLPEWVRIGFSAATGLDIPGESHDVLSWSFASNLPHASSNIDPLDLTSFVLHEAI.

Residues 1-32 (MATSKLKTQNVVVSLSLTLTLVLVLLTSKANS) form the signal peptide. Residue Asn107 is glycosylated (N-linked (GlcNAc...) asparagine).

It belongs to the leguminous lectin family. As to quaternary structure, homotetramer.

In terms of biological role, binds GalNAc and galactose. The protein is Lectin (LE1) of Glycine max (Soybean).